The primary structure comprises 191 residues: Protein Ves (191 aa).

The protein belongs to the Ves family.

The polypeptide is Protein Ves (Escherichia coli O127:H6 (strain E2348/69 / EPEC)).